Consider the following 194-residue polypeptide: Large ribosomal subunit protein bL25 (194 aa).

Belongs to the bacterial ribosomal protein bL25 family. CTC subfamily. Part of the 50S ribosomal subunit; part of the 5S rRNA/L5/L18/L25 subcomplex. Contacts the 5S rRNA. Binds to the 5S rRNA independently of L5 and L18.

This is one of the proteins that binds to the 5S RNA in the ribosome where it forms part of the central protuberance. The polypeptide is Large ribosomal subunit protein bL25 (Neorickettsia sennetsu (strain ATCC VR-367 / Miyayama) (Ehrlichia sennetsu)).